The primary structure comprises 152 residues: Regulatory protein RecX (152 aa).

This sequence belongs to the RecX family.

It is found in the cytoplasm. Its function is as follows. Modulates RecA activity. This is Regulatory protein RecX from Haemophilus influenzae (strain PittGG).